The primary structure comprises 397 residues: Argininosuccinate synthase (397 aa).

9–17 (AYSGGLDTS) serves as a coordination point for ATP. Tyrosine 87 is an L-citrulline binding site. Glycine 117 is a binding site for ATP. 3 residues coordinate L-aspartate: threonine 119, asparagine 123, and aspartate 124. Residue asparagine 123 coordinates L-citrulline. L-citrulline contacts are provided by arginine 127, serine 175, serine 184, glutamate 257, and tyrosine 269.

The protein belongs to the argininosuccinate synthase family. Type 1 subfamily. As to quaternary structure, homotetramer.

Its subcellular location is the cytoplasm. It carries out the reaction L-citrulline + L-aspartate + ATP = 2-(N(omega)-L-arginino)succinate + AMP + diphosphate + H(+). The protein operates within amino-acid biosynthesis; L-arginine biosynthesis; L-arginine from L-ornithine and carbamoyl phosphate: step 2/3. In Dictyoglomus turgidum (strain DSM 6724 / Z-1310), this protein is Argininosuccinate synthase.